A 503-amino-acid polypeptide reads, in one-letter code: ATP synthase subunit alpha (503 aa).

169–176 provides a ligand contact to ATP; it reads GDRKTGKT.

This sequence belongs to the ATPase alpha/beta chains family. As to quaternary structure, F-type ATPases have 2 components, CF(1) - the catalytic core - and CF(0) - the membrane proton channel. CF(1) has five subunits: alpha(3), beta(3), gamma(1), delta(1), epsilon(1). CF(0) has three main subunits: a(1), b(2) and c(9-12). The alpha and beta chains form an alternating ring which encloses part of the gamma chain. CF(1) is attached to CF(0) by a central stalk formed by the gamma and epsilon chains, while a peripheral stalk is formed by the delta and b chains.

It localises to the cell membrane. The enzyme catalyses ATP + H2O + 4 H(+)(in) = ADP + phosphate + 5 H(+)(out). Functionally, produces ATP from ADP in the presence of a proton gradient across the membrane. The alpha chain is a regulatory subunit. The chain is ATP synthase subunit alpha from Lactobacillus delbrueckii subsp. bulgaricus (strain ATCC 11842 / DSM 20081 / BCRC 10696 / JCM 1002 / NBRC 13953 / NCIMB 11778 / NCTC 12712 / WDCM 00102 / Lb 14).